A 210-amino-acid chain; its full sequence is Large ribosomal subunit protein uL3 (210 aa).

Residues 139 to 165 are disordered; sequence AEKVHRSPGSIGHATFPGKVFKGKKMP.

Belongs to the universal ribosomal protein uL3 family. As to quaternary structure, part of the 50S ribosomal subunit. Forms a cluster with proteins L14 and L19.

Its function is as follows. One of the primary rRNA binding proteins, it binds directly near the 3'-end of the 23S rRNA, where it nucleates assembly of the 50S subunit. The polypeptide is Large ribosomal subunit protein uL3 (Maridesulfovibrio salexigens (strain ATCC 14822 / DSM 2638 / NCIMB 8403 / VKM B-1763) (Desulfovibrio salexigens)).